Here is a 365-residue protein sequence, read N- to C-terminus: tRNA N6-adenosine threonylcarbamoyltransferase (365 aa).

Residues histidine 119 and histidine 123 each contribute to the Fe cation site. Substrate-binding positions include 141–145 (LVSGG), aspartate 174, glycine 187, and asparagine 288. Position 316 (aspartate 316) interacts with Fe cation.

It belongs to the KAE1 / TsaD family. Fe(2+) is required as a cofactor.

It is found in the cytoplasm. The enzyme catalyses L-threonylcarbamoyladenylate + adenosine(37) in tRNA = N(6)-L-threonylcarbamoyladenosine(37) in tRNA + AMP + H(+). In terms of biological role, required for the formation of a threonylcarbamoyl group on adenosine at position 37 (t(6)A37) in tRNAs that read codons beginning with adenine. Is involved in the transfer of the threonylcarbamoyl moiety of threonylcarbamoyl-AMP (TC-AMP) to the N6 group of A37, together with TsaE and TsaB. TsaD likely plays a direct catalytic role in this reaction. The sequence is that of tRNA N6-adenosine threonylcarbamoyltransferase from Rhizobium etli (strain CIAT 652).